Here is a 122-residue protein sequence, read N- to C-terminus: Large ribosomal subunit protein uL18 (122 aa).

The protein belongs to the universal ribosomal protein uL18 family. Part of the 50S ribosomal subunit; part of the 5S rRNA/L5/L18/L25 subcomplex. Contacts the 5S and 23S rRNAs.

Its function is as follows. This is one of the proteins that bind and probably mediate the attachment of the 5S RNA into the large ribosomal subunit, where it forms part of the central protuberance. This Mycobacterium tuberculosis (strain ATCC 25177 / H37Ra) protein is Large ribosomal subunit protein uL18.